Reading from the N-terminus, the 161-residue chain is Nucleotide-binding protein Bcenmc03_2579 (161 aa).

Belongs to the YajQ family.

Nucleotide-binding protein. The polypeptide is Nucleotide-binding protein Bcenmc03_2579 (Burkholderia orbicola (strain MC0-3)).